The following is a 385-amino-acid chain: Protein pelota homolog (385 aa).

Lys-162 participates in a covalent cross-link: Glycyl lysine isopeptide (Lys-Gly) (interchain with G-Cter in SUMO2). Phosphoserine occurs at positions 374, 380, 381, and 382.

The protein belongs to the eukaryotic release factor 1 family. Pelota subfamily. Component of the Pelota-HBS1L complex, also named Dom34-Hbs1 complex, composed of PELO and HBS1L. Interacts with PINK1. Interacts with ABCE1. Interacts with CNOT4. Requires a divalent metal cation as cofactor.

It is found in the cytoplasm. In terms of biological role, component of the Pelota-HBS1L complex, a complex that recognizes stalled ribosomes and triggers the No-Go Decay (NGD) pathway. In the Pelota-HBS1L complex, PELO recognizes ribosomes stalled at the 3' end of an mRNA and engages stalled ribosomes by destabilizing mRNA in the mRNA channel. Following mRNA extraction from stalled ribosomes by the SKI complex, the Pelota-HBS1L complex promotes recruitment of ABCE1, which drives the disassembly of stalled ribosomes, followed by degradation of damaged mRNAs as part of the NGD pathway. As part of the PINK1-regulated signaling, upon mitochondrial damage is recruited to the ribosome/mRNA-ribonucleoprotein complex associated to mitochondrial outer membrane thereby enabling the recruitment of autophagy receptors and induction of mitophagy. This is Protein pelota homolog (PELO) from Pongo abelii (Sumatran orangutan).